The primary structure comprises 142 residues: Transcriptional regulator MraZ (142 aa).

SpoVT-AbrB domains follow at residues 5–48 (EFEY…PLCE) and 77–120 (AFDV…DKET).

It belongs to the MraZ family. As to quaternary structure, forms oligomers.

It is found in the cytoplasm. Its subcellular location is the nucleoid. This Dehalococcoides mccartyi (strain ATCC BAA-2100 / JCM 16839 / KCTC 5957 / BAV1) protein is Transcriptional regulator MraZ.